Reading from the N-terminus, the 416-residue chain is Calreticulin (416 aa).

The N-linked (GlcNAc...) asparagine glycan is linked to asparagine 54. Cysteines 108 and 140 form a disulfide. An alpha-D-glucoside contacts are provided by tyrosine 112, lysine 114, tyrosine 131, and aspartate 138. A run of 7 repeats spans residues 194 to 205 (KQSGSVYTDWDI), 213 to 224 (DPEAKKPEDWED), 230 to 241 (DPEDKKPEGYDD), 248 to 259 (DPEAKKPEDWDD), 263 to 273 (GEWTAPTIPNP), 277 to 287 (GEWKPKKIKNP), and 291 to 301 (GKWKAPMIDNP). A 4 X approximate repeats region spans residues 194-259 (KQSGSVYTDW…EAKKPEDWDD (66 aa)). The tract at residues 209–281 (KQIKDPEAKK…NPDYKGEWKP (73 aa)) is disordered. Over residues 210 to 255 (QIKDPEAKKPEDWEDKEYIPDPEDKKPEGYDDIPKEITDPEAKKPE) the composition is skewed to basic and acidic residues. The segment at 263–301 (GEWTAPTIPNPDYKGEWKPKKIKNPNFKGKWKAPMIDNP) is 3 X approximate repeats. Residue glutamate 321 participates in an alpha-D-glucoside binding. Over residues 349 to 378 (ETWGKNKDAEKAAFDEAEKKKEEEEAKDDP) the composition is skewed to basic and acidic residues. Residues 349–416 (ETWGKNKDAE…EDDEDVHDEL (68 aa)) are disordered. Residues 379–416 (TESDDEKPDEEGESDGEGDDESKDIDNEEDDEDVHDEL) are compositionally biased toward acidic residues. Residues 413 to 416 (HDEL) carry the Prevents secretion from ER motif.

It belongs to the calreticulin family.

The protein resides in the endoplasmic reticulum lumen. Molecular calcium-binding chaperone promoting folding, oligomeric assembly and quality control in the ER via the calreticulin/calnexin cycle. This lectin may interact transiently with almost all of the monoglucosylated glycoproteins that are synthesized in the ER. In Berberis stolonifera (Barberry), this protein is Calreticulin.